An 824-amino-acid chain; its full sequence is Sphingomyelin phosphodiesterase 4 (824 aa).

Residues 777–797 (LAFLFIFYILGSLLSLGPLIC) traverse the membrane as a helical segment.

Mg(2+) is required as a cofactor.

It is found in the endoplasmic reticulum membrane. The protein resides in the golgi apparatus membrane. The protein localises to the nucleus envelope. Its subcellular location is the cell membrane. It localises to the sarcolemma. It catalyses the reaction a sphingomyelin + H2O = phosphocholine + an N-acylsphing-4-enine + H(+). In terms of biological role, catalyzes the hydrolysis of membrane sphingomyelin to form phosphorylcholine and ceramide. It has a relevant role in the homeostasis of membrane sphingolipids, thereby influencing membrane integrity, and endoplasmic reticulum organization and function. May sensitize cells to DNA damage-induced apoptosis. In Xenopus laevis (African clawed frog), this protein is Sphingomyelin phosphodiesterase 4 (smpd4).